The following is a 1108-amino-acid chain: Topless-related protein 3 (1108 aa).

The 33-residue stretch at 4-36 (LSRELVFLILQFLEEEKFKESVHRLEKESGFFF) folds into the LisH domain. The 59-residue stretch at 34–92 (FFFNTKYFDEKVLAGEWDDVETYLSGFTKVDDNRYSMKIFFEIRKQKYLEALDRQEKAK) folds into the CTLH domain. Residue S214 is modified to Phosphoserine. 6 WD repeats span residues 343–383 (HQGS…RLVS), 405–444 (ETPI…DLRQ), 450–491 (AHVG…HFTF), 493–534 (GHDA…SRVD), 583–623 (EFQK…VLTS), and 628–667 (GGLP…RSLR). The disordered stretch occupies residues 706-725 (HSQMLNGVDPSKSRIDDSTD). Residues 716 to 725 (SKSRIDDSTD) show a composition bias toward basic and acidic residues. 5 WD repeats span residues 751-790 (GSST…QNPS), 818-856 (NLEN…VMTT), 859-899 (PPPP…VKSK), 902-941 (GHQK…KRKS), and 994-1033 (SLSA…LRCR). The interval 1084 to 1108 (GMIPPSEAINSPSTTSNQTPEQLQR) is disordered. The span at 1091 to 1108 (AINSPSTTSNQTPEQLQR) shows a compositional bias: polar residues.

Tetramer. Interacts with NINJA/AFPH2. Interacts with SMXL6. Interacts with SPL (via EAR motif). Interacts with SPEAR3/TIE1.

It localises to the nucleus. Its function is as follows. Transcriptional corepressor. Negative regulator of jasmonate responses. The chain is Topless-related protein 3 (TPR3) from Arabidopsis thaliana (Mouse-ear cress).